Here is an 876-residue protein sequence, read N- to C-terminus: Valine--tRNA ligase (876 aa).

The 'HIGH' region signature appears at 44 to 54 (PNVTGKLHLGH). Residues 520 to 524 (KMSKS) carry the 'KMSKS' region motif. Position 523 (lysine 523) interacts with ATP. Positions 806–876 (EGLIDMDKEI…VKLRINQLKA (71 aa)) form a coiled coil.

The protein belongs to the class-I aminoacyl-tRNA synthetase family. ValS type 1 subfamily. Monomer.

The protein resides in the cytoplasm. It catalyses the reaction tRNA(Val) + L-valine + ATP = L-valyl-tRNA(Val) + AMP + diphosphate. Its function is as follows. Catalyzes the attachment of valine to tRNA(Val). As ValRS can inadvertently accommodate and process structurally similar amino acids such as threonine, to avoid such errors, it has a 'posttransfer' editing activity that hydrolyzes mischarged Thr-tRNA(Val) in a tRNA-dependent manner. This is Valine--tRNA ligase from Staphylococcus saprophyticus subsp. saprophyticus (strain ATCC 15305 / DSM 20229 / NCIMB 8711 / NCTC 7292 / S-41).